We begin with the raw amino-acid sequence, 557 residues long: Dihydroxy-acid dehydratase (557 aa).

Cys-50 lines the [2Fe-2S] cluster pocket. Asp-82 is a Mg(2+) binding site. Cys-123 provides a ligand contact to [2Fe-2S] cluster. Mg(2+)-binding residues include Asp-124 and Lys-125. Position 125 is an N6-carboxylysine (Lys-125). A [2Fe-2S] cluster-binding site is contributed by Cys-195. Glu-447 contacts Mg(2+). The active-site Proton acceptor is the Ser-473.

Belongs to the IlvD/Edd family. As to quaternary structure, homodimer. Requires [2Fe-2S] cluster as cofactor. It depends on Mg(2+) as a cofactor.

The catalysed reaction is (2R)-2,3-dihydroxy-3-methylbutanoate = 3-methyl-2-oxobutanoate + H2O. It carries out the reaction (2R,3R)-2,3-dihydroxy-3-methylpentanoate = (S)-3-methyl-2-oxopentanoate + H2O. Its pathway is amino-acid biosynthesis; L-isoleucine biosynthesis; L-isoleucine from 2-oxobutanoate: step 3/4. It functions in the pathway amino-acid biosynthesis; L-valine biosynthesis; L-valine from pyruvate: step 3/4. Functions in the biosynthesis of branched-chain amino acids. Catalyzes the dehydration of (2R,3R)-2,3-dihydroxy-3-methylpentanoate (2,3-dihydroxy-3-methylvalerate) into 2-oxo-3-methylpentanoate (2-oxo-3-methylvalerate) and of (2R)-2,3-dihydroxy-3-methylbutanoate (2,3-dihydroxyisovalerate) into 2-oxo-3-methylbutanoate (2-oxoisovalerate), the penultimate precursor to L-isoleucine and L-valine, respectively. The sequence is that of Dihydroxy-acid dehydratase from Herminiimonas arsenicoxydans.